A 326-amino-acid chain; its full sequence is Tryptophan--tRNA ligase (326 aa).

ATP contacts are provided by residues 11-13 and 19-20; these read QPT and GN. A 'HIGH' region motif is present at residues 12 to 20; sequence PTGQIHLGN. Asp135 contributes to the L-tryptophan binding site. ATP is bound by residues 147–149, Val186, and 195–199; these read GED and KMSKS. The 'KMSKS' region signature appears at 195–199; it reads KMSKS.

Belongs to the class-I aminoacyl-tRNA synthetase family. Homodimer.

The protein resides in the cytoplasm. The catalysed reaction is tRNA(Trp) + L-tryptophan + ATP = L-tryptophyl-tRNA(Trp) + AMP + diphosphate + H(+). Functionally, catalyzes the attachment of tryptophan to tRNA(Trp). The sequence is that of Tryptophan--tRNA ligase from Helicobacter pylori (strain ATCC 700392 / 26695) (Campylobacter pylori).